A 398-amino-acid polypeptide reads, in one-letter code: Acetate kinase (398 aa).

A Mg(2+)-binding site is contributed by N8. K15 is a binding site for ATP. Residue R92 participates in substrate binding. Residue D149 is the Proton donor/acceptor of the active site. Residues 209-213 (HLGNG), 283-285 (DFR), and 331-335 (GVGEN) each bind ATP. Residue E385 coordinates Mg(2+).

The protein belongs to the acetokinase family. In terms of assembly, homodimer. The cofactor is Mg(2+). Requires Mn(2+) as cofactor.

The protein localises to the cytoplasm. It catalyses the reaction acetate + ATP = acetyl phosphate + ADP. Its pathway is metabolic intermediate biosynthesis; acetyl-CoA biosynthesis; acetyl-CoA from acetate: step 1/2. Functionally, catalyzes the formation of acetyl phosphate from acetate and ATP. Can also catalyze the reverse reaction. In Corynebacterium efficiens (strain DSM 44549 / YS-314 / AJ 12310 / JCM 11189 / NBRC 100395), this protein is Acetate kinase.